The chain runs to 196 residues: Phosphoheptose isomerase (196 aa).

One can recognise an SIS domain in the interval 34 to 192 (MVQCLLGGNK…CEIIDTTLFP (159 aa)). 49-51 (NGG) contributes to the substrate binding site. Zn(2+) contacts are provided by His58 and Gln62. Residues Gln62, 91-92 (ND), 117-119 (STS), Ser122, and Gln172 each bind substrate. Zn(2+)-binding residues include Gln172 and His180.

The protein belongs to the SIS family. GmhA subfamily. In terms of assembly, homotetramer. Zn(2+) serves as cofactor.

Its subcellular location is the cytoplasm. The enzyme catalyses 2 D-sedoheptulose 7-phosphate = D-glycero-alpha-D-manno-heptose 7-phosphate + D-glycero-beta-D-manno-heptose 7-phosphate. It functions in the pathway carbohydrate biosynthesis; D-glycero-D-manno-heptose 7-phosphate biosynthesis; D-glycero-alpha-D-manno-heptose 7-phosphate and D-glycero-beta-D-manno-heptose 7-phosphate from sedoheptulose 7-phosphate: step 1/1. Functionally, catalyzes the isomerization of sedoheptulose 7-phosphate in D-glycero-D-manno-heptose 7-phosphate. This chain is Phosphoheptose isomerase, found in Colwellia psychrerythraea (strain 34H / ATCC BAA-681) (Vibrio psychroerythus).